Here is a 396-residue protein sequence, read N- to C-terminus: Methylthioribose kinase (396 aa).

ATP-binding positions include asparagine 44, lysine 61, and 115 to 117 (EDL). Position 233 (aspartate 233) interacts with substrate. 250–252 (DPE) provides a ligand contact to ATP. Arginine 340 lines the substrate pocket.

The protein belongs to the methylthioribose kinase family. Homodimer.

The catalysed reaction is 5-(methylsulfanyl)-D-ribose + ATP = 5-(methylsulfanyl)-alpha-D-ribose 1-phosphate + ADP + H(+). The protein operates within amino-acid biosynthesis; L-methionine biosynthesis via salvage pathway; S-methyl-5-thio-alpha-D-ribose 1-phosphate from S-methyl-5'-thioadenosine (hydrolase route): step 2/2. Catalyzes the phosphorylation of methylthioribose into methylthioribose-1-phosphate. The protein is Methylthioribose kinase of Geobacillus kaustophilus (strain HTA426).